Consider the following 126-residue polypeptide: MSEPNPKAFPLADAALTQQILDIVQQATHLRQLKKGANEATKTLNRGISEFIIMAADAEPIEILLHLPLLCEDKNVPYIFVPSKVALGRACGVSRPVISASVTSNDASQLKDQIIQMKDKIERLLI.

It belongs to the eukaryotic ribosomal protein eL8 family. As to quaternary structure, component of the U3 snoRNP particle. Binds to the C'/D and B/C motifs in U3 snoRNA. Component of the 25S U4/U6.U5 tri-snRNP particle, a subcomplex of the spliceosome. Binds to the 5' stem-loop of U4 snRNA.

It localises to the nucleus. It is found in the nucleolus. In terms of biological role, common component of the spliceosome and rRNA processing machinery. In association with the spliceosomal U4/U6.U5 tri-snRNP particle, required for splicing of pre-mRNA. In association with box C/D snoRNPs, required for processing of pre-ribosomal RNA (rRNA) and site-specific 2'-O-methylation of substrate RNAs. Essential for the accumulation and stability of U4 snRNA, U6 snRNA, and box C/D snoRNAs. The polypeptide is 13 kDa ribonucleoprotein-associated protein (SNU13) (Yarrowia lipolytica (strain CLIB 122 / E 150) (Yeast)).